The following is an 88-amino-acid chain: Co-chaperonin GroES (88 aa).

The protein belongs to the GroES chaperonin family. Heptamer of 7 subunits arranged in a ring. Interacts with the chaperonin GroEL.

It is found in the cytoplasm. Together with the chaperonin GroEL, plays an essential role in assisting protein folding. The GroEL-GroES system forms a nano-cage that allows encapsulation of the non-native substrate proteins and provides a physical environment optimized to promote and accelerate protein folding. GroES binds to the apical surface of the GroEL ring, thereby capping the opening of the GroEL channel. This Treponema pallidum (strain Nichols) protein is Co-chaperonin GroES.